A 335-amino-acid chain; its full sequence is Probable E3 ubiquitin-protein ligase BAH1-like (335 aa).

In terms of domain architecture, SPX spans Met-1–Leu-163. Residues Cys-231–Arg-280 form an RING-type zinc finger.

Belongs to the RING-type zinc finger family.

It carries out the reaction S-ubiquitinyl-[E2 ubiquitin-conjugating enzyme]-L-cysteine + [acceptor protein]-L-lysine = [E2 ubiquitin-conjugating enzyme]-L-cysteine + N(6)-ubiquitinyl-[acceptor protein]-L-lysine.. Its pathway is protein modification; protein ubiquitination. The chain is Probable E3 ubiquitin-protein ligase BAH1-like (RF178) from Arabidopsis thaliana (Mouse-ear cress).